Here is a 352-residue protein sequence, read N- to C-terminus: S-adenosylmethionine:tRNA ribosyltransferase-isomerase (352 aa).

The protein belongs to the QueA family. As to quaternary structure, monomer.

Its subcellular location is the cytoplasm. It carries out the reaction 7-aminomethyl-7-carbaguanosine(34) in tRNA + S-adenosyl-L-methionine = epoxyqueuosine(34) in tRNA + adenine + L-methionine + 2 H(+). Its pathway is tRNA modification; tRNA-queuosine biosynthesis. Transfers and isomerizes the ribose moiety from AdoMet to the 7-aminomethyl group of 7-deazaguanine (preQ1-tRNA) to give epoxyqueuosine (oQ-tRNA). In Solibacter usitatus (strain Ellin6076), this protein is S-adenosylmethionine:tRNA ribosyltransferase-isomerase.